Here is a 422-residue protein sequence, read N- to C-terminus: Probable tRNA pseudouridine synthase D 2 (422 aa).

Aspartate 89 (nucleophile) is an active-site residue. In terms of domain architecture, TRUD spans glycine 160–isoleucine 371.

The protein belongs to the pseudouridine synthase TruD family.

It carries out the reaction uridine(13) in tRNA = pseudouridine(13) in tRNA. Functionally, could be responsible for synthesis of pseudouridine from uracil-13 in transfer RNAs. This chain is Probable tRNA pseudouridine synthase D 2, found in Methanocaldococcus jannaschii (strain ATCC 43067 / DSM 2661 / JAL-1 / JCM 10045 / NBRC 100440) (Methanococcus jannaschii).